The following is a 453-amino-acid chain: Phosphoglucosamine mutase (453 aa).

Residue Ser-105 is the Phosphoserine intermediate of the active site. Mg(2+) contacts are provided by Ser-105, Asp-244, Asp-246, and Asp-248. Ser-105 is subject to Phosphoserine.

The protein belongs to the phosphohexose mutase family. It depends on Mg(2+) as a cofactor. Activated by phosphorylation.

The enzyme catalyses alpha-D-glucosamine 1-phosphate = D-glucosamine 6-phosphate. Its function is as follows. Catalyzes the conversion of glucosamine-6-phosphate to glucosamine-1-phosphate. The protein is Phosphoglucosamine mutase of Chromohalobacter salexigens (strain ATCC BAA-138 / DSM 3043 / CIP 106854 / NCIMB 13768 / 1H11).